We begin with the raw amino-acid sequence, 362 residues long: DLA class I histocompatibility antigen, A9/A9 alpha chain (362 aa).

Positions 1-24 (MEVVMPRALLVLLSAALALTPTRA) are cleaved as a signal peptide. The tract at residues 25 to 114 (GSHSLRYFYT…LRGYYNQSEA (90 aa)) is alpha-1. The Extracellular portion of the chain corresponds to 25–306 (GSHSLRYFYT…RRWEPSPLST (282 aa)). Asn-110 is a glycosylation site (N-linked (GlcNAc...) asparagine). The segment at 115–207 (GSHTRQTMYG…EMGKETLLRA (93 aa)) is alpha-2. 2 cysteine pairs are disulfide-bonded: Cys-125/Cys-189 and Cys-228/Cys-284. An alpha-3 region spans residues 208–299 (DPPSTRVTHH…GLPEPITRRW (92 aa)). The Ig-like C1-type domain maps to 210 to 296 (PSTRVTHHPV…QHEGLPEPIT (87 aa)). The segment at 300-306 (EPSPLST) is connecting peptide. The chain crosses the membrane as a helical span at residues 307–329 (IVIVSIAALVLLVVAGVIGAVIW). At 330–362 (RKQRSGGKGPGYSHAARDDSAQGSDVSLTAPRV) the chain is on the cytoplasmic side. The tract at residues 333–362 (RSGGKGPGYSHAARDDSAQGSDVSLTAPRV) is disordered.

It belongs to the MHC class I family. In terms of assembly, heterodimer of an alpha chain and a beta chain (beta-2-microglobulin).

It is found in the membrane. In terms of biological role, involved in the presentation of foreign antigens to the immune system. The protein is DLA class I histocompatibility antigen, A9/A9 alpha chain of Canis lupus familiaris (Dog).